We begin with the raw amino-acid sequence, 304 residues long: Acetylglutamate kinase (304 aa).

Substrate is bound by residues 69-70, arginine 91, and asparagine 202; that span reads GG.

This sequence belongs to the acetylglutamate kinase family. ArgB subfamily.

Its subcellular location is the cytoplasm. The enzyme catalyses N-acetyl-L-glutamate + ATP = N-acetyl-L-glutamyl 5-phosphate + ADP. The protein operates within amino-acid biosynthesis; L-arginine biosynthesis; N(2)-acetyl-L-ornithine from L-glutamate: step 2/4. Its function is as follows. Catalyzes the ATP-dependent phosphorylation of N-acetyl-L-glutamate. This is Acetylglutamate kinase from Caulobacter sp. (strain K31).